We begin with the raw amino-acid sequence, 595 residues long: L-fucose isomerase (595 aa).

Active-site proton acceptor residues include glutamate 341 and aspartate 365. Mn(2+)-binding residues include glutamate 341, aspartate 365, and histidine 531.

It belongs to the L-fucose isomerase family. The cofactor is Mn(2+).

It is found in the cytoplasm. The enzyme catalyses L-fucose = L-fuculose. It participates in carbohydrate degradation; L-fucose degradation; L-lactaldehyde and glycerone phosphate from L-fucose: step 1/3. Its function is as follows. Converts the aldose L-fucose into the corresponding ketose L-fuculose. In Clostridium perfringens (strain 13 / Type A), this protein is L-fucose isomerase.